The primary structure comprises 39 residues: Photosystem II reaction center protein J (39 aa).

A helical transmembrane segment spans residues 9–29 (LWLVVTFGGIVVLTVLGIFIY).

It belongs to the PsbJ family. In terms of assembly, PSII is composed of 1 copy each of membrane proteins PsbA, PsbB, PsbC, PsbD, PsbE, PsbF, PsbH, PsbI, PsbJ, PsbK, PsbL, PsbM, PsbT, PsbY, PsbZ, Psb30/Ycf12, at least 3 peripheral proteins of the oxygen-evolving complex and a large number of cofactors. It forms dimeric complexes.

The protein localises to the plastid. Its subcellular location is the chloroplast thylakoid membrane. Functionally, one of the components of the core complex of photosystem II (PSII). PSII is a light-driven water:plastoquinone oxidoreductase that uses light energy to abstract electrons from H(2)O, generating O(2) and a proton gradient subsequently used for ATP formation. It consists of a core antenna complex that captures photons, and an electron transfer chain that converts photonic excitation into a charge separation. In Cyanidium caldarium (Red alga), this protein is Photosystem II reaction center protein J.